The primary structure comprises 473 residues: Gamma-aminobutyric acid receptor subunit beta-3 (473 aa).

Residues Met-1–Ala-25 form the signal peptide. The Extracellular portion of the chain corresponds to Gln-26 to Phe-246. N-linked (GlcNAc...) asparagine glycans are attached at residues Asn-33 and Asn-105. Histamine is bound at residue Tyr-122. Cys-161 and Cys-175 form a disulfide bridge. Residue Asn-174 is glycosylated (N-linked (GlcNAc...) asparagine). Positions 180, 182, and 227 each coordinate 4-aminobutanoate. Residues Ser-181–Tyr-182 and Thr-227 contribute to the histamine site. Residues Ile-247 to Ile-267 traverse the membrane as a helical segment. At Asn-268 to Ala-271 the chain is on the cytoplasmic side. Residues Ser-272–His-292 form a helical membrane-spanning segment. Over Leu-293 to Lys-304 the chain is Extracellular. A helical transmembrane segment spans residues Ala-305–Asn-328. At Tyr-329 to Ala-447 the chain is on the cytoplasmic side. A helical transmembrane segment spans residues Ile-448–Tyr-470. The Extracellular segment spans residues Tyr-471–Asn-473.

It belongs to the ligand-gated ion channel (TC 1.A.9) family. Gamma-aminobutyric acid receptor (TC 1.A.9.5) subfamily. GABRB3 sub-subfamily. As to quaternary structure, heteropentamer, formed by a combination of alpha (GABRA1-6), beta (GABRB1-3), gamma (GABRG1-3), delta (GABRD), epsilon (GABRE), rho (GABRR1-3), pi (GABRP) and theta (GABRQ) chains, each subunit exhibiting distinct physiological and pharmacological properties. Can form functional homopentamers (in vitro). Interacts with UBQLN1. May interact with KIF21B. Identified in a complex of 720 kDa composed of LHFPL4, NLGN2, GABRA1, GABRB2, GABRG2 and GABRB3. Interacts with LHFPL4. Interacts with GIT1; this interaction is required for synaptic GABRB3 surface stability and inhibitory synapse strength.

Its subcellular location is the postsynaptic cell membrane. It is found in the cell membrane. The protein localises to the cytoplasmic vesicle membrane. It carries out the reaction chloride(in) = chloride(out). Its activity is regulated as follows. Potentiated by histamine. Beta subunit of the heteropentameric ligand-gated chloride channel gated by gamma-aminobutyric acid (GABA), a major inhibitory neurotransmitter in the brain. GABA-gated chloride channels, also named GABA(A) receptors (GABAAR), consist of five subunits arranged around a central pore and contain GABA active binding site(s) located at the alpha and beta subunit interface(s). GABAARs containing beta-3/GABRB3 subunit are found at both synaptic and extrasynaptic sites. When activated by GABA, GABAARs selectively allow the flow of chloride anions across the cell membrane down their electrochemical gradient. Chloride influx into the postsynaptic neuron following GABAAR opening decreases the neuron ability to generate a new action potential, thereby reducing nerve transmission. GABAARs containing alpha-1 and beta-3 subunits exhibit synaptogenic activity; the gamma-2 subunit being necessary but not sufficient to induce rapid synaptic contacts formation. Extrasynaptic beta-3 receptors contribute to the tonic GABAergic inhibition. GABAARs containing alpha-1, beta-3 and epsilon subunits may permit spontaneous chloride channel activity while preserving the structural information required for GABA-gated openings. Beta-containing GABAARs can simultaneously bind GABA and histamine where histamine binds at the interface of two neighboring beta subunits, which may be involved in the regulation of sleep and wakefulness. Plays an important role in somatosensation and in the production of antinociception. The chain is Gamma-aminobutyric acid receptor subunit beta-3 from Mus musculus (Mouse).